Here is a 231-residue protein sequence, read N- to C-terminus: Protein OPG061 (231 aa).

It belongs to the orthopoxvirus OPG058 family.

It is found in the host nucleus. It localises to the host nucleolus. The sequence is that of Protein OPG061 (OPG061) from Homo sapiens (Human).